Reading from the N-terminus, the 597-residue chain is Scarecrow-like protein 5 (597 aa).

The tract at residues 111–172 (ESSSGTKSHP…SPLSGSSATN (62 aa)) is disordered. A compositionally biased stretch (low complexity) spans 123–169 (NNKNNSSSTTSFSSNESPISQANNNNLSRFNNHSPEENNNSPLSGSS). The region spanning 218–597 (SMEMISRGDL…QPLITSCAWR (380 aa)) is the GRAS domain. Positions 225 to 285 (GDLKGVLYEC…VARLASSGSS (61 aa)) are leucine repeat I (LRI). The interval 304 to 369 (MHILYEACPY…GGPPNVRITG (66 aa)) is VHIID. The short motif at 335-339 (VHIID) is the VHIID element. The leucine repeat II (LRII) stretch occupies residues 385–417 (LVGQRLGKLAEMCGVPFEFHGAALCCTEVEIEK). Residues 426–520 (LAVNFPLVLH…QHCLAREVVN (95 aa)) form a PFYRE region. An SAW region spans residues 523–597 (ACEGVEREER…QPLITSCAWR (75 aa)).

This sequence belongs to the GRAS family. In terms of tissue distribution, expressed in seedlings, roots, shoots, leaves, flowers and siliques.

The protein resides in the nucleus. Probable transcription factor involved in plant development. The protein is Scarecrow-like protein 5 (SCL5) of Arabidopsis thaliana (Mouse-ear cress).